We begin with the raw amino-acid sequence, 191 residues long: Protein GrpE (191 aa).

Composition is skewed to basic and acidic residues over residues 1–19 (MKDE…EPES) and 29–42 (QQGE…EKEC). The interval 1–42 (MKDEHNQEHDHLSQKEPESYQKACACKEQQGEEKQEASEKEC) is disordered.

It belongs to the GrpE family. As to quaternary structure, homodimer.

Its subcellular location is the cytoplasm. In terms of biological role, participates actively in the response to hyperosmotic and heat shock by preventing the aggregation of stress-denatured proteins, in association with DnaK and GrpE. It is the nucleotide exchange factor for DnaK and may function as a thermosensor. Unfolded proteins bind initially to DnaJ; upon interaction with the DnaJ-bound protein, DnaK hydrolyzes its bound ATP, resulting in the formation of a stable complex. GrpE releases ADP from DnaK; ATP binding to DnaK triggers the release of the substrate protein, thus completing the reaction cycle. Several rounds of ATP-dependent interactions between DnaJ, DnaK and GrpE are required for fully efficient folding. The protein is Protein GrpE of Helicobacter pylori (strain HPAG1).